A 550-amino-acid polypeptide reads, in one-letter code: Endonuclease/exonuclease/phosphatase family domain-containing protein 1 (550 aa).

One can recognise a HhH domain in the interval 39–68 (ERLNINTATEEELMTLPGVNRGVAQNIVEY). Over residues 194-213 (STNTNGGFTHPSPTSFSVQS) the composition is skewed to polar residues. The interval 194–216 (STNTNGGFTHPSPTSFSVQSDEP) is disordered.

The chain is Endonuclease/exonuclease/phosphatase family domain-containing protein 1 (eepd1) from Danio rerio (Zebrafish).